Here is a 145-residue protein sequence, read N- to C-terminus: MDLNFDLYMNGVVEQARNEIENAGYEQLTTADEVDKVLQQNGTSLVMVNSVCGCAGGIARPAASHALHYDKLPDRLVTVFAGQDKEATQQARDYFEGYAPSSPSFALIKDGKITEMIERHQIEGHDVMDVINQLQGLFDKYCDER.

Belongs to the bacilliredoxin family.

The chain is Bacilliredoxin SH1401 from Staphylococcus haemolyticus (strain JCSC1435).